Here is a 239-residue protein sequence, read N- to C-terminus: tRNA (guanine-N(1)-)-methyltransferase (239 aa).

Residues G108 and 127–132 (LGDFVL) contribute to the S-adenosyl-L-methionine site.

The protein belongs to the RNA methyltransferase TrmD family. In terms of assembly, homodimer.

Its subcellular location is the cytoplasm. It carries out the reaction guanosine(37) in tRNA + S-adenosyl-L-methionine = N(1)-methylguanosine(37) in tRNA + S-adenosyl-L-homocysteine + H(+). Functionally, specifically methylates guanosine-37 in various tRNAs. The polypeptide is tRNA (guanine-N(1)-)-methyltransferase (Streptococcus thermophilus (strain ATCC BAA-250 / LMG 18311)).